Consider the following 372-residue polypeptide: Chaperone protein DnaJ (372 aa).

The J domain occupies 5–69; sequence DYYEVLGVSK…DKRKQYDQFG (65 aa). The CR-type zinc-finger motif lies at 139–221; sequence GVDKIIELDL…CKGKGKYLER (83 aa). Zn(2+) is bound by residues Cys-152, Cys-155, Cys-169, Cys-172, Cys-195, Cys-198, Cys-209, and Cys-212. CXXCXGXG motif repeat units follow at residues 152–159, 169–176, 195–202, and 209–216; these read CSVCFGSG, CNNCHGTG, CNVCNGAG, and CKNCKGKG.

This sequence belongs to the DnaJ family. Homodimer. The cofactor is Zn(2+).

Its subcellular location is the cytoplasm. Functionally, participates actively in the response to hyperosmotic and heat shock by preventing the aggregation of stress-denatured proteins and by disaggregating proteins, also in an autonomous, DnaK-independent fashion. Unfolded proteins bind initially to DnaJ; upon interaction with the DnaJ-bound protein, DnaK hydrolyzes its bound ATP, resulting in the formation of a stable complex. GrpE releases ADP from DnaK; ATP binding to DnaK triggers the release of the substrate protein, thus completing the reaction cycle. Several rounds of ATP-dependent interactions between DnaJ, DnaK and GrpE are required for fully efficient folding. Also involved, together with DnaK and GrpE, in the DNA replication of plasmids through activation of initiation proteins. This is Chaperone protein DnaJ from Mycoplasma mycoides subsp. mycoides SC (strain CCUG 32753 / NCTC 10114 / PG1).